A 60-amino-acid polypeptide reads, in one-letter code: Phospholipase A2 (60 aa).

Ca(2+) contacts are provided by Y27, G29, and G31. A disulfide bridge links C28 with C44. H47 is an active-site residue. D48 is a Ca(2+) binding site.

Ca(2+) serves as cofactor. As to expression, expressed by the venom gland.

Its subcellular location is the secreted. The enzyme catalyses a 1,2-diacyl-sn-glycero-3-phosphocholine + H2O = a 1-acyl-sn-glycero-3-phosphocholine + a fatty acid + H(+). Functionally, snake venom phospholipase A2 (PLA2) that displays mild but significant inhibition of mouse platelet aggregation induced by ADP and collagen. In vivo, induces edema in the foot pads and gastrocnemius muscles of mice but shows no myonecrotic or myotoxic activity. PA2 catalyzes the calcium-dependent hydrolysis of the 2-acyl groups in 3-sn-phosphoglycerides. This chain is Phospholipase A2, found in Lachesis muta rhombeata (Bushmaster).